The chain runs to 159 residues: SsrA-binding protein (159 aa).

Residues 140 to 150 (RATEKERDWNR) are compositionally biased toward basic and acidic residues. Residues 140–159 (RATEKERDWNRQKQRVLRQR) form a disordered region.

This sequence belongs to the SmpB family.

It localises to the cytoplasm. In terms of biological role, required for rescue of stalled ribosomes mediated by trans-translation. Binds to transfer-messenger RNA (tmRNA), required for stable association of tmRNA with ribosomes. tmRNA and SmpB together mimic tRNA shape, replacing the anticodon stem-loop with SmpB. tmRNA is encoded by the ssrA gene; the 2 termini fold to resemble tRNA(Ala) and it encodes a 'tag peptide', a short internal open reading frame. During trans-translation Ala-aminoacylated tmRNA acts like a tRNA, entering the A-site of stalled ribosomes, displacing the stalled mRNA. The ribosome then switches to translate the ORF on the tmRNA; the nascent peptide is terminated with the 'tag peptide' encoded by the tmRNA and targeted for degradation. The ribosome is freed to recommence translation, which seems to be the essential function of trans-translation. This is SsrA-binding protein from Alcanivorax borkumensis (strain ATCC 700651 / DSM 11573 / NCIMB 13689 / SK2).